Here is a 455-residue protein sequence, read N- to C-terminus: Zinc finger SWIM domain-containing protein 1 (455 aa).

Residues Ala264–Thr288 form a disordered region. An SWIM-type zinc finger spans residues Met333 to Gln375.

In Mus musculus (Mouse), this protein is Zinc finger SWIM domain-containing protein 1 (Zswim1).